We begin with the raw amino-acid sequence, 489 residues long: Cytochrome P450-DIT2 (489 aa).

C435 contacts heme.

It belongs to the cytochrome P450 family. Heme serves as cofactor.

Its function is as follows. Involved in spore wall maturation. Thought to catalyze the oxidation of tyrosine residues in the formation of LL-dityrosine a precursor of the spore wall. The chain is Cytochrome P450-DIT2 (DIT2) from Saccharomyces cerevisiae (strain ATCC 204508 / S288c) (Baker's yeast).